Reading from the N-terminus, the 76-residue chain is DNA gyrase inhibitor YacG (76 aa).

Residues C7, C10, C26, and C30 each coordinate Zn(2+).

The protein belongs to the DNA gyrase inhibitor YacG family. In terms of assembly, interacts with GyrB. The cofactor is Zn(2+).

Functionally, inhibits all the catalytic activities of DNA gyrase by preventing its interaction with DNA. Acts by binding directly to the C-terminal domain of GyrB, which probably disrupts DNA binding by the gyrase. In Pseudoalteromonas translucida (strain TAC 125), this protein is DNA gyrase inhibitor YacG.